A 104-amino-acid chain; its full sequence is UPF0145 protein NP_2600A (104 aa).

The protein belongs to the UPF0145 family.

The protein is UPF0145 protein NP_2600A of Natronomonas pharaonis (strain ATCC 35678 / DSM 2160 / CIP 103997 / JCM 8858 / NBRC 14720 / NCIMB 2260 / Gabara) (Halobacterium pharaonis).